Consider the following 658-residue polypeptide: Sulfate transporter 3.1 (658 aa).

Topologically, residues 1–85 are cytoplasmic; it reads MGTEDYTFPQ…RYNLKFFKSD (85 aa). The helical transmembrane segment at 86–106 threads the bilayer; sequence LIAGITIASLAIPQGISYAKL. At 107–108 the chain is on the extracellular side; the sequence is AN. The helical transmembrane segment at 109-129 threads the bilayer; sequence LPPILGLYSSFVPPLVYAVLG. The Cytoplasmic portion of the chain corresponds to 130–133; the sequence is SSRD. Residues 134 to 154 traverse the membrane as a helical segment; sequence LAVGTVAVASLLTGAMLSKEV. The Extracellular segment spans residues 155-163; sequence DAEKDPKLY. The helical transmembrane segment at 164–184 threads the bilayer; the sequence is LHLAFTATFFAGVLEASLGIF. Position 185 (Arg-185) is a topological domain, cytoplasmic. Residues 186 to 206 form a helical membrane-spanning segment; sequence LGFIVDFLSHATIVGFMGGAA. The Extracellular segment spans residues 207–245; the sequence is TVVSLQQLKGIFGLKHFTDSTDVISVMRSVFSQTHEWRW. Residues 246–266 traverse the membrane as a helical segment; sequence ESGVLGCGFLFFLLSTRYFSI. Residues 267–271 lie on the Cytoplasmic side of the membrane; the sequence is KKPKF. The chain crosses the membrane as a helical span at residues 272-292; it reads FWVAAMAPLTSVILGSLLVYF. At 293–332 the chain is on the extracellular side; the sequence is THAERHGVQVIGDLKKGLNPLSGSDLIFTSPYMSTAVKTG. The helical transmembrane segment at 333–353 threads the bilayer; it reads LITGIIALAEGVAVGRSFAMF. At 354–363 the chain is on the cytoplasmic side; it reads KNYNIDGNKE. Residues 364 to 384 form a helical membrane-spanning segment; the sequence is MIAFGMMNIVGSFTSCYLTTG. Over 385–398 the chain is Extracellular; it reads PFSRSAVNYNAGCK. A helical transmembrane segment spans residues 399–419; it reads TAMSNIVMAIAVMFTLLFLTP. Residues 420-425 are Cytoplasmic-facing; that stretch reads LFHYTP. Residues 426 to 446 traverse the membrane as a helical segment; the sequence is LVVLSAIIISAMLGLIDYQAA. Over 447-464 the chain is Extracellular; that stretch reads IHLWKVDKFDFLVCMSAY. A helical membrane pass occupies residues 465–485; sequence VGVVFGSVEIGLVVAVAISIA. Residues 486–658 are Cytoplasmic-facing; it reads RLLLFVSRPK…ASKNEPWNNV (173 aa). The 125-residue stretch at 513-637 folds into the STAS domain; sequence QYPSSRTVPG…LTVGEAVEAC (125 aa).

This sequence belongs to the SLC26A/SulP transporter (TC 2.A.53) family. As to expression, expressed only in leaves.

It localises to the membrane. In terms of biological role, h(+)/sulfate cotransporter that may play a role in the regulation of sulfate assimilation. This Arabidopsis thaliana (Mouse-ear cress) protein is Sulfate transporter 3.1 (SULTR3;1).